The following is a 262-amino-acid chain: Acyl-[acyl-carrier-protein]--UDP-N-acetylglucosamine O-acyltransferase (262 aa).

Belongs to the transferase hexapeptide repeat family. LpxA subfamily. In terms of assembly, homotrimer.

The protein localises to the cytoplasm. It catalyses the reaction a (3R)-hydroxyacyl-[ACP] + UDP-N-acetyl-alpha-D-glucosamine = a UDP-3-O-[(3R)-3-hydroxyacyl]-N-acetyl-alpha-D-glucosamine + holo-[ACP]. It participates in glycolipid biosynthesis; lipid IV(A) biosynthesis; lipid IV(A) from (3R)-3-hydroxytetradecanoyl-[acyl-carrier-protein] and UDP-N-acetyl-alpha-D-glucosamine: step 1/6. Functionally, involved in the biosynthesis of lipid A, a phosphorylated glycolipid that anchors the lipopolysaccharide to the outer membrane of the cell. This is Acyl-[acyl-carrier-protein]--UDP-N-acetylglucosamine O-acyltransferase from Burkholderia thailandensis (strain ATCC 700388 / DSM 13276 / CCUG 48851 / CIP 106301 / E264).